A 364-amino-acid chain; its full sequence is MAQQTPLYEQHTLCGARMVDFHGWMMPLHYGSQIDEHHAVRTDAGMFDVSHMTIVDLRGSRTREFLRYLLANDVAKLTKSGKALYSGMLNASGGVIDDLIVYYFTEDFFRLVVNSATREKDLSWITQHAEPFGIEITVRDDLSMIAVQGPNAQAKAATLFNDAQRQAVEGMKPFFGVQAGDLFIATTGYTGEAGYEIALPNEKAADFWRALVEAGVKPCGLGARDTLRLEAGMNLYSQEMDETISPLAANMGWTIAWEPADRDFIGREALEAQREHGTEKLVGLVMTEKGVLRNELPVRFTDAQGNQHEGIITSGTFSPTLGYSIALARVPEGIGETAIVQIRNREMPVKVTKPVFVRNGKAVA.

It belongs to the GcvT family. As to quaternary structure, the glycine cleavage system is composed of four proteins: P, T, L and H.

It carries out the reaction N(6)-[(R)-S(8)-aminomethyldihydrolipoyl]-L-lysyl-[protein] + (6S)-5,6,7,8-tetrahydrofolate = N(6)-[(R)-dihydrolipoyl]-L-lysyl-[protein] + (6R)-5,10-methylene-5,6,7,8-tetrahydrofolate + NH4(+). Functionally, the glycine cleavage system catalyzes the degradation of glycine. In Escherichia coli O127:H6 (strain E2348/69 / EPEC), this protein is Aminomethyltransferase.